We begin with the raw amino-acid sequence, 287 residues long: Inorganic pyrophosphatase (287 aa).

A diphosphate-binding site is contributed by arginine 79. Mg(2+) is bound by residues aspartate 116, aspartate 121, and aspartate 153.

The protein belongs to the PPase family. Mg(2+) serves as cofactor.

The protein resides in the cytoplasm. The enzyme catalyses diphosphate + H2O = 2 phosphate + H(+). This is Inorganic pyrophosphatase (IPP1) from Zygosaccharomyces bailii.